We begin with the raw amino-acid sequence, 169 residues long: Inorganic pyrophosphatase (169 aa).

N-formylmethionine is present on methionine 1. Substrate is bound by residues lysine 28, arginine 42, and tyrosine 54. Mg(2+) is bound by residues aspartate 64, aspartate 69, and aspartate 101. Position 138 (tyrosine 138) interacts with substrate.

Belongs to the PPase family. As to quaternary structure, homohexamer. Mg(2+) is required as a cofactor.

The protein resides in the cytoplasm. The catalysed reaction is diphosphate + H2O = 2 phosphate + H(+). Its function is as follows. Catalyzes the hydrolysis of inorganic pyrophosphate (PPi) forming two phosphate ions. In Nostoc sp. (strain PCC 7120 / SAG 25.82 / UTEX 2576), this protein is Inorganic pyrophosphatase.